The chain runs to 153 residues: Pheromone-binding protein Gp-9 (153 aa).

Residues 1-19 form the signal peptide; that stretch reads MKTFVLHIFIFALVAFASA. Cystine bridges form between C37-C77, C73-C129, and C118-C138.

This sequence belongs to the PBP/GOBP family. Homodimer.

It localises to the secreted. In terms of biological role, colony queen number, a major feature of social organization, is associated with worker genotype for Gp-9. Colonies are headed by either a single reproductive queen (monogyne form) or multiple queens (polygyne form). Differences in worker Gp-9 genotypes between social forms may cause differences in workers' abilities to recognize queens and regulate their numbers. This is Pheromone-binding protein Gp-9 from Solenopsis interrupta (Fire ant).